Consider the following 341-residue polypeptide: Tubulin-specific chaperone C (341 aa).

Residue methionine 1 is modified to N-acetylmethionine. A compositionally biased stretch (basic and acidic residues) spans 34 to 49; that stretch reads ERQIEVERRKQKRQDQ. Residues 34–55 are disordered; that stretch reads ERQIEVERRKQKRQDQEVEEEK. Serine 79 is modified (phosphoserine). The tract at residues 148–173 is disordered; the sequence is TAQVDAAPVTSAAPSPPVTKEEEGAP. Residues 163–318 enclose the C-CAP/cofactor C-like domain; sequence PPVTKEEEGA…NWDQVDDFNW (156 aa).

This sequence belongs to the TBCC family. As to quaternary structure, supercomplex made of cofactors A to E. Cofactors A and D function by capturing and stabilizing tubulin in a quasi-native conformation. Cofactor E binds to the cofactor D-tubulin complex; interaction with cofactor C then causes the release of tubulin polypeptides that are committed to the native state.

It is found in the cytoplasm. Functionally, tubulin-folding protein; involved in the final step of the tubulin folding pathway. The sequence is that of Tubulin-specific chaperone C (Tbcc) from Mus musculus (Mouse).